The following is a 74-amino-acid chain: Delta-actitoxin-Amc3a (74 aa).

A signal peptide spans 1 to 19; it reads MNRLIILVVAAVFLGMASA. A propeptide spanning residues 20 to 24 is cleaved from the precursor; that stretch reads EEDVL. Hydroxyproline is present on Pro29. Intrachain disulfides connect Cys30-Cys70, Cys32-Cys60, and Cys53-Cys71. A Glutamine amide modification is found at Gln73.

It belongs to the sea anemone sodium channel inhibitory toxin family. Type I subfamily.

The protein localises to the secreted. It localises to the nematocyst. Inhibits voltage-gated sodium channels (Nav). The sequence is that of Delta-actitoxin-Amc3a from Antheopsis maculata (Sea anemone).